The chain runs to 285 residues: Transcription factor MYB15 (285 aa).

2 HTH myb-type domains span residues 9–61 (KMGL…MNYL) and 62–116 (KPDI…KKRL). 2 DNA-binding regions (H-T-H motif) span residues 37-61 (WRALPKQAGLLRCGKSCRLRWMNYL) and 89-112 (WSAIAAKLPGRTDNEIKNVWHTHL). The tract at residues 115 to 172 (RLEDYQPAKPKTSNKKKGTKPKSESVITSSNSTRSESELADSSNPSGESLFSTSPSTS) is disordered. A compositionally biased stretch (polar residues) spans 139–158 (SVITSSNSTRSESELADSSN). The segment covering 159–172 (PSGESLFSTSPSTS) has biased composition (low complexity).

Interacts with SCRM/ICE1. Expressed in roots, leaves, stems and flowers. Expressed in stomatal guard cells.

The protein localises to the nucleus. Functionally, transcription factor involved in cold-regulation of CBF genes and in the development of freezing tolerance. May be part of a complex network of transcription factors controlling the expression of CBF genes and other genes in response to cold stress. Binds to the MYB recognition sequences in the promoters of CBF1, CBF2 and CBF3 genes. Involved in drought and salt tolerance. May enhance expression levels of genes involved in abscisic acid (ABA) biosynthesis and signaling, as well as those encoding stress-protective proteins. The protein is Transcription factor MYB15 of Arabidopsis thaliana (Mouse-ear cress).